Reading from the N-terminus, the 334-residue chain is S-adenosylmethionine:tRNA ribosyltransferase-isomerase (334 aa).

Belongs to the QueA family. As to quaternary structure, monomer.

Its subcellular location is the cytoplasm. The enzyme catalyses 7-aminomethyl-7-carbaguanosine(34) in tRNA + S-adenosyl-L-methionine = epoxyqueuosine(34) in tRNA + adenine + L-methionine + 2 H(+). It functions in the pathway tRNA modification; tRNA-queuosine biosynthesis. In terms of biological role, transfers and isomerizes the ribose moiety from AdoMet to the 7-aminomethyl group of 7-deazaguanine (preQ1-tRNA) to give epoxyqueuosine (oQ-tRNA). This chain is S-adenosylmethionine:tRNA ribosyltransferase-isomerase, found in Rubrobacter xylanophilus (strain DSM 9941 / JCM 11954 / NBRC 16129 / PRD-1).